The following is a 531-amino-acid chain: MSVDPKTLNKQVAKRRTFAIISHPDAGKTTMTEKLLLWGQAIQVAGEVKGRKTDRHATSDWMSMEQERGISITTSVMQFPYKDHIVNLLDTPGHADFSEDTYRTLTAVDSALMMVDGAKGVEERTIKLMEVCRMRDTPIISFVNKLDRQIRDPLELLDEIETVLGIKCVPVTWPIGMGQDFVGVYHLTEDKTYLYKKGHGGEITEIETREGYDYPDVRQRLGELAFSAFEESLELVQMALENFDVDLFLKGEMTPVLFGTALGNFGVNMVLDTLIEHAPPPKSHPTNERIVAADETSFSGFVFKIQANMDPRHRDRIAFLRVCSGKYEKGMKMKHVRLGKDVRISDALTFLAGDREALEEAYPGDIIGLHNHGTISIGDSFTEGEELNFTGIPHFAPELFRRVVLKDPLKSKALQKGLQQLSEEGATQVFMPQINNDLILGAVGVLQFEVVAHRLKEEYKVQCIFEPVSIATVRWIHCDDEAILAKFKKKAHDQLSVDGGGHLTYLAPSRVNLQLMQERYPEVTFSNTREH.

Positions 13-282 (AKRRTFAIIS…TLIEHAPPPK (270 aa)) constitute a tr-type G domain. Residues 22-29 (SHPDAGKT), 90-94 (DTPGH), and 144-147 (NKLD) each bind GTP.

Belongs to the TRAFAC class translation factor GTPase superfamily. Classic translation factor GTPase family. PrfC subfamily.

It is found in the cytoplasm. Its function is as follows. Increases the formation of ribosomal termination complexes and stimulates activities of RF-1 and RF-2. It binds guanine nucleotides and has strong preference for UGA stop codons. It may interact directly with the ribosome. The stimulation of RF-1 and RF-2 is significantly reduced by GTP and GDP, but not by GMP. This Psychrobacter sp. (strain PRwf-1) protein is Peptide chain release factor 3.